The primary structure comprises 406 residues: Tubby-like F-box protein 11 (406 aa).

The F-box domain maps to 53–108 (SCWTQLPPELLREVLARVEESEGWWPRRRDVVACAGVCRSWRGIVREIVRTPEASG).

Belongs to the TUB family. As to expression, ubiquitous.

The protein is Tubby-like F-box protein 11 (TULP11) of Oryza sativa subsp. japonica (Rice).